The sequence spans 310 residues: Aspartate carbamoyltransferase catalytic subunit (310 aa).

Residues R58 and T59 each coordinate carbamoyl phosphate. K86 is a binding site for L-aspartate. Carbamoyl phosphate is bound by residues R108, H136, and Q139. Residues R169 and R224 each coordinate L-aspartate. Carbamoyl phosphate is bound by residues G265 and P266.

The protein belongs to the aspartate/ornithine carbamoyltransferase superfamily. ATCase family. As to quaternary structure, heterododecamer (2C3:3R2) of six catalytic PyrB chains organized as two trimers (C3), and six regulatory PyrI chains organized as three dimers (R2).

The enzyme catalyses carbamoyl phosphate + L-aspartate = N-carbamoyl-L-aspartate + phosphate + H(+). Its pathway is pyrimidine metabolism; UMP biosynthesis via de novo pathway; (S)-dihydroorotate from bicarbonate: step 2/3. Its function is as follows. Catalyzes the condensation of carbamoyl phosphate and aspartate to form carbamoyl aspartate and inorganic phosphate, the committed step in the de novo pyrimidine nucleotide biosynthesis pathway. This is Aspartate carbamoyltransferase catalytic subunit from Citrifermentans bemidjiense (strain ATCC BAA-1014 / DSM 16622 / JCM 12645 / Bem) (Geobacter bemidjiensis).